A 417-amino-acid polypeptide reads, in one-letter code: NADH-quinone oxidoreductase subunit D (417 aa).

The protein belongs to the complex I 49 kDa subunit family. As to quaternary structure, NDH-1 is composed of 14 different subunits. Subunits NuoB, C, D, E, F, and G constitute the peripheral sector of the complex.

Its subcellular location is the cell inner membrane. The enzyme catalyses a quinone + NADH + 5 H(+)(in) = a quinol + NAD(+) + 4 H(+)(out). Functionally, NDH-1 shuttles electrons from NADH, via FMN and iron-sulfur (Fe-S) centers, to quinones in the respiratory chain. The immediate electron acceptor for the enzyme in this species is believed to be ubiquinone. Couples the redox reaction to proton translocation (for every two electrons transferred, four hydrogen ions are translocated across the cytoplasmic membrane), and thus conserves the redox energy in a proton gradient. The sequence is that of NADH-quinone oxidoreductase subunit D from Paraburkholderia phymatum (strain DSM 17167 / CIP 108236 / LMG 21445 / STM815) (Burkholderia phymatum).